Consider the following 1583-residue polypeptide: Transcriptional activator GLI3 (1583 aa).

M1 bears the N-acetylmethionine mark. 2 stretches are compositionally biased toward polar residues: residues M1–A10 and I58–S78. Positions M1–S78 are disordered. Position 175 is an omega-N-methylarginine (R175). The disordered stretch occupies residues Q368–E475. Over residues V403–S421 the composition is skewed to low complexity. K438 is covalently cross-linked (Glycyl lysine isopeptide (Lys-Gly) (interchain with G-Cter in SUMO2)). The span at S448 to G457 shows a compositional bias: polar residues. Positions V461 to P474 are enriched in basic and acidic residues. K462 is covalently cross-linked (Glycyl lysine isopeptide (Lys-Gly) (interchain with G-Cter in SUMO2)). C2H2-type zinc fingers lie at residues T480–H505, F513–H540, H546–H570, Y576–H601, and Y607–H632. Residues D620–L728 form a disordered region. Over residues H632 to P648 the composition is skewed to basic and acidic residues. S664 bears the Phosphoserine mark. Basic and acidic residues predominate over residues S684–K699. Low complexity predominate over residues S703 to S726. The segment at D745–N845 is mediates interaction with DZIP1. A Glycyl lysine isopeptide (Lys-Gly) (interchain with G-Cter in ubiquitin) cross-link involves residue K773. A Glycyl lysine isopeptide (Lys-Gly) (interchain with G-Cter in SUMO2); alternate cross-link involves residue K779. K779 participates in a covalent cross-link: Glycyl lysine isopeptide (Lys-Gly) (interchain with G-Cter in ubiquitin); alternate. Glycyl lysine isopeptide (Lys-Gly) (interchain with G-Cter in ubiquitin) cross-links involve residues K784 and K800. Residues G809–P828 are disordered. Polar residues predominate over residues N810–S820. 6 positions are modified to phosphoserine; by PKA: S849, S865, S877, S907, S980, and S1006. Residues R863 to S880 show a composition bias toward low complexity. The segment at R863–L918 is disordered. The segment at E1164–P1189 is disordered. Positions S1166–S1175 are enriched in low complexity.

It belongs to the GLI C2H2-type zinc-finger protein family. In terms of assembly, the phosphorylated form interacts with BTRC. The full-length GLI3 form (GLI3FL) interacts with SUFU and this interaction regulates the formation of either repressor or activator forms of GLI3. Its association with SUFU is regulated by Hh signaling and dissociation of the SUFU-GLI3 interaction requires the presence of the ciliary motor KIF3A. Interacts with KIF7. The activator form of GLI3 (GLI3A) but not the repressor form (GLI3R) can interact with TRPS1. Interacts with ZIC1. Interacts with ZIC3 (via C2H2-type domains 3, 4 and 5); the interaction enhances its transcriptional activity. Interacts with WRD11; the interaction associates EMX1 with GLI3. Interacts with DZIP1; retains GLI3 within the cytoplasm. Post-translationally, phosphorylated by DYRK2 (in vitro). Phosphorylated on multiple sites by protein kinase A (PKA) and phosphorylation by PKA primes further phosphorylation by CK1 and GSK3. Phosphorylation is essential for its proteolytic processing. In terms of processing, transcriptional repressor GLI3R, a C-terminally truncated form, is generated from the full-length GLI3 protein (GLI3FL/GLI3-190) through proteolytic processing. This process requires PKA-primed phosphorylation of GLI3, ubiquitination of GLI3 and the presence of BTRC. GLI3FL is complexed with SUFU in the cytoplasm and is maintained in a neutral state. Without the Hh signal, the SUFU-GLI3 complex is recruited to cilia, leading to the efficient processing of GLI3FL into GLI3R. GLI3R formation leads to its dissociation from SUFU, allowing it to translocate into the nucleus, and repress Hh target genes. When Hh signaling is initiated, SUFU dissociates from GLI3FL and this has two consequences. First, GLI3R production is halted. Second, free GLI3FL translocates to the nucleus, where it is phosphorylated, destabilized, and converted to a transcriptional activator (GLI3A). Phosphorylated in vitro by ULK3.

The protein resides in the nucleus. Its subcellular location is the cytoplasm. The protein localises to the cell projection. It localises to the cilium. Functionally, has a dual function as a transcriptional activator and a repressor of the sonic hedgehog (Shh) pathway, and plays a role in limb development. The full-length GLI3 form (GLI3FL) after phosphorylation and nuclear translocation, acts as an activator (GLI3A) while GLI3R, its C-terminally truncated form, acts as a repressor. A proper balance between the GLI3 activator and the repressor GLI3R, rather than the repressor gradient itself or the activator/repressor ratio gradient, specifies limb digit number and identity. In concert with TRPS1, plays a role in regulating the size of the zone of distal chondrocytes, in restricting the zone of PTHLH expression in distal cells and in activating chondrocyte proliferation. Binds to the minimal GLI-consensus sequence 5'-GGGTGGTC-3'. The protein is Transcriptional activator GLI3 (Gli3) of Mus musculus (Mouse).